Reading from the N-terminus, the 120-residue chain is Large ribosomal subunit protein uL18 (120 aa).

Belongs to the universal ribosomal protein uL18 family. Part of the 50S ribosomal subunit. Part of the 5S rRNA/L5/L18/L25 subcomplex. Contacts the 23S rRNA and 5S rRNA. Required for catalysis of RNase M5.

This is one of the proteins that bind and probably mediate the attachment of the 5S RNA into the large ribosomal subunit, where it forms part of the central protuberance. Functionally, required for correct processing of both the 5' and 3' ends of 5S rRNA precursor, which is does in conjunction with ribonuclease M5 (RNase M5, rnmV). Possibly folds the 5S rRNA precursor into the correct conformation, thus acting as a chaperone. The polypeptide is Large ribosomal subunit protein uL18 (Bacillus subtilis (strain 168)).